The sequence spans 1140 residues: Squamosa promoter-binding-like protein 15 (1140 aa).

Disordered regions lie at residues 73–112 (RVNAGLSHHQQQQQQSPPAAAKAAEALRQGGGGSGGLNLQ) and 124–177 (DVSP…GGNS). Low complexity-rich tracts occupy residues 76 to 100 (AGLSHHQQQQQQSPPAAAKAAEALR) and 125 to 135 (VSPAATTVSSS). Over residues 164-177 (ASGGGGGGGGGGNS) the composition is skewed to gly residues. The SBP-type zinc-finger motif lies at 184 to 261 (YPMCQVDDCR…AGHNRRRRKT (78 aa)). The Zn(2+) site is built by C187, C192, C209, H212, C228, C231, H235, and C247. The short motif at 244 to 260 (KRSCRRRLAGHNRRRRK) is the Bipartite nuclear localization signal element. 4 disordered regions span residues 327-382 (NNGN…ADGF), 403-472 (TSNP…TPPY), 496-517 (LSSESSNPLDERSPSSSPPVTH), and 558-597 (KDSERPIENGSPPNPAYQSCYTSTSCSDHSPSTSNSDGQD). The segment covering 345 to 375 (ASHSQQQDSVQRTTNGFEKQTNGLDKQTNGF) has biased composition (polar residues). Positions 403–430 (TSNPDSNTSQSQGSSDSSGNNKSKSQST) are enriched in low complexity. A compositionally biased stretch (basic and acidic residues) spans 450–466 (RKNDALERSPEMYKQPD). The segment covering 496–514 (LSSESSNPLDERSPSSSPP) has biased composition (polar residues). Low complexity predominate over residues 579-593 (TSTSCSDHSPSTSNS).

In terms of tissue distribution, expressed in stems, leaf sheaths, and young panicles.

It is found in the nucleus. Functionally, trans-acting factor that binds specifically to the consensus nucleotide sequence 5'-TNCGTACAA-3'. The protein is Squamosa promoter-binding-like protein 15 (SPL15) of Oryza sativa subsp. indica (Rice).